The primary structure comprises 188 residues: UPF0301 protein Smlt1098 (188 aa).

This sequence belongs to the UPF0301 (AlgH) family.

In Stenotrophomonas maltophilia (strain K279a), this protein is UPF0301 protein Smlt1098.